A 133-amino-acid polypeptide reads, in one-letter code: ATP synthase epsilon chain, chloroplastic (133 aa).

It belongs to the ATPase epsilon chain family. In terms of assembly, F-type ATPases have 2 components, CF(1) - the catalytic core - and CF(0) - the membrane proton channel. CF(1) has five subunits: alpha(3), beta(3), gamma(1), delta(1), epsilon(1). CF(0) has three main subunits: a, b and c.

It is found in the plastid. The protein resides in the chloroplast thylakoid membrane. Its function is as follows. Produces ATP from ADP in the presence of a proton gradient across the membrane. In Lactuca sativa (Garden lettuce), this protein is ATP synthase epsilon chain, chloroplastic.